Here is a 411-residue protein sequence, read N- to C-terminus: Serine/threonine transporter SstT (411 aa).

9 helical membrane-spanning segments follow: residues 14–34, 43–63, 82–102, 141–161, 192–212, 218–238, 290–310, 330–350, and 357–377; these read GSLV…ASVA, FLGG…VFIL, IIML…VMSF, ALMS…GFAL, IGIF…ALAG, AVLL…IVFF, IPLG…VLTL, VVAA…LLLI, and FGIP…IGVI.

Belongs to the dicarboxylate/amino acid:cation symporter (DAACS) (TC 2.A.23) family.

It is found in the cell inner membrane. The catalysed reaction is L-serine(in) + Na(+)(in) = L-serine(out) + Na(+)(out). It carries out the reaction L-threonine(in) + Na(+)(in) = L-threonine(out) + Na(+)(out). Involved in the import of serine and threonine into the cell, with the concomitant import of sodium (symport system). This chain is Serine/threonine transporter SstT, found in Photobacterium profundum (strain SS9).